We begin with the raw amino-acid sequence, 427 residues long: Glutamate-1-semialdehyde 2,1-aminomutase (427 aa).

Lys267 is modified (N6-(pyridoxal phosphate)lysine).

It belongs to the class-III pyridoxal-phosphate-dependent aminotransferase family. HemL subfamily. As to quaternary structure, homodimer. Pyridoxal 5'-phosphate serves as cofactor.

The protein localises to the cytoplasm. It catalyses the reaction (S)-4-amino-5-oxopentanoate = 5-aminolevulinate. It participates in porphyrin-containing compound metabolism; protoporphyrin-IX biosynthesis; 5-aminolevulinate from L-glutamyl-tRNA(Glu): step 2/2. This is Glutamate-1-semialdehyde 2,1-aminomutase from Desulfosudis oleivorans (strain DSM 6200 / JCM 39069 / Hxd3) (Desulfococcus oleovorans).